Reading from the N-terminus, the 111-residue chain is Ribonuclease P protein component (111 aa).

This sequence belongs to the RnpA family. Consists of a catalytic RNA component (M1 or rnpB) and a protein subunit.

The catalysed reaction is Endonucleolytic cleavage of RNA, removing 5'-extranucleotides from tRNA precursor.. RNaseP catalyzes the removal of the 5'-leader sequence from pre-tRNA to produce the mature 5'-terminus. It can also cleave other RNA substrates such as 4.5S RNA. The protein component plays an auxiliary but essential role in vivo by binding to the 5'-leader sequence and broadening the substrate specificity of the ribozyme. This chain is Ribonuclease P protein component, found in Streptococcus thermophilus (strain CNRZ 1066).